The chain runs to 147 residues: Small ribosomal subunit protein uS12 (147 aa).

Belongs to the universal ribosomal protein uS12 family. Part of the 30S ribosomal subunit.

With S4 and S5 plays an important role in translational accuracy. Located at the interface of the 30S and 50S subunits. The polypeptide is Small ribosomal subunit protein uS12 (Pyrobaculum islandicum (strain DSM 4184 / JCM 9189 / GEO3)).